Here is a 145-residue protein sequence, read N- to C-terminus: uncharacterized protein (145 aa).

Transmembrane regions (helical) follow at residues 3–23 (VGII…GIGG), 83–103 (YVID…YLVP), and 105–125 (LSLL…MLWI).

It is found in the cell membrane. This is an uncharacterized protein from Methanocaldococcus jannaschii (strain ATCC 43067 / DSM 2661 / JAL-1 / JCM 10045 / NBRC 100440) (Methanococcus jannaschii).